A 204-amino-acid polypeptide reads, in one-letter code: FMN-dependent NADH:quinone oxidoreductase (204 aa).

FMN-binding positions include Ser9, 15 to 17 (SVS), 95 to 98 (MYNF), and 139 to 142 (SRGG).

Belongs to the azoreductase type 1 family. In terms of assembly, homodimer. It depends on FMN as a cofactor.

The enzyme catalyses 2 a quinone + NADH + H(+) = 2 a 1,4-benzosemiquinone + NAD(+). It catalyses the reaction N,N-dimethyl-1,4-phenylenediamine + anthranilate + 2 NAD(+) = 2-(4-dimethylaminophenyl)diazenylbenzoate + 2 NADH + 2 H(+). Its function is as follows. Quinone reductase that provides resistance to thiol-specific stress caused by electrophilic quinones. Also exhibits azoreductase activity. Catalyzes the reductive cleavage of the azo bond in aromatic azo compounds to the corresponding amines. The polypeptide is FMN-dependent NADH:quinone oxidoreductase (Methylocella silvestris (strain DSM 15510 / CIP 108128 / LMG 27833 / NCIMB 13906 / BL2)).